The sequence spans 143 residues: Aspartate 1-decarboxylase (143 aa).

The active-site Schiff-base intermediate with substrate; via pyruvic acid is the Ser-25. The residue at position 25 (Ser-25) is a Pyruvic acid (Ser). Thr-57 serves as a coordination point for substrate. Tyr-58 (proton donor) is an active-site residue. 73 to 75 (GAA) provides a ligand contact to substrate.

The protein belongs to the PanD family. As to quaternary structure, heterooctamer of four alpha and four beta subunits. Requires pyruvate as cofactor. Is synthesized initially as an inactive proenzyme, which is activated by self-cleavage at a specific serine bond to produce a beta-subunit with a hydroxyl group at its C-terminus and an alpha-subunit with a pyruvoyl group at its N-terminus.

The protein resides in the cytoplasm. It carries out the reaction L-aspartate + H(+) = beta-alanine + CO2. It functions in the pathway cofactor biosynthesis; (R)-pantothenate biosynthesis; beta-alanine from L-aspartate: step 1/1. Catalyzes the pyruvoyl-dependent decarboxylation of aspartate to produce beta-alanine. The sequence is that of Aspartate 1-decarboxylase from Mycolicibacterium paratuberculosis (strain ATCC BAA-968 / K-10) (Mycobacterium paratuberculosis).